The chain runs to 577 residues: Endopolyphosphatase (577 aa).

Topologically, residues Met1–Arg2 are cytoplasmic. Residues Pro3 to Gly23 traverse the membrane as a helical; Signal-anchor for type II membrane protein segment. Topologically, residues Asn24–Asp577 are vacuolar. N-linked (GlcNAc...) asparagine glycosylation is found at Asn363, Asn370, Asn375, and Asn399. Residues Ser430 to Pro460 form a disordered region. Positions Lys437 to Ile456 are enriched in basic residues. Asn481 carries N-linked (GlcNAc...) asparagine glycosylation.

It belongs to the endopolyphosphatase PPN1 family. Requires a divalent metal cation as cofactor. Processing by proteases in the vacuole may be required for activation.

It is found in the vacuole membrane. It carries out the reaction [phosphate](n+1) + n H2O = (n+1) phosphate + n H(+). Functionally, catalyzes the hydrolysis of inorganic polyphosphate (polyP) chains of many hundreds of phosphate residues into shorter lengths. This Schizosaccharomyces pombe (strain 972 / ATCC 24843) (Fission yeast) protein is Endopolyphosphatase (ppn1).